Reading from the N-terminus, the 105-residue chain is Thioredoxin (105 aa).

Residues 1 to 105 enclose the Thioredoxin domain; it reads MANNVMDSSF…SLLDWINKSI (105 aa). C30 and C33 are joined by a disulfide.

Belongs to the thioredoxin family.

Functionally, component of the thioredoxin-thioredoxin reductase system. Participates in various redox reactions through the reversible oxidation of its active center dithiol to a disulfide and catalyzes dithiol-disulfide exchange reactions. The chain is Thioredoxin (trxA) from Rickettsia conorii (strain ATCC VR-613 / Malish 7).